A 75-amino-acid chain; its full sequence is Protein SlyX homolog (75 aa).

The protein belongs to the SlyX family.

This is Protein SlyX homolog from Chromobacterium violaceum (strain ATCC 12472 / DSM 30191 / JCM 1249 / CCUG 213 / NBRC 12614 / NCIMB 9131 / NCTC 9757 / MK).